A 559-amino-acid chain; its full sequence is Small ribosomal subunit protein bS1 (559 aa).

S1 motif domains lie at 21 to 87 (GSII…LSRE), 105 to 171 (SETV…VSRR), 192 to 260 (GIEI…LGLK), 277 to 347 (GIKL…LGLK), 364 to 434 (GIHV…LGIK), and 451 to 520 (GAII…LTFH).

It belongs to the bacterial ribosomal protein bS1 family.

Functionally, binds mRNA; thus facilitating recognition of the initiation point. It is needed to translate mRNA with a short Shine-Dalgarno (SD) purine-rich sequence. This Buchnera aphidicola subsp. Schizaphis graminum (strain Sg) protein is Small ribosomal subunit protein bS1 (rpsA).